The chain runs to 310 residues: MKNKIVFTGSPDFAVESLQRLYDNPNNEIQLVISQEDKKRNRNKFSPTAVKKRAMELGIDVITPKNINDEEVFDLLDKLNPDFIVVVAYGQLIKKRILDRFKNKILNVHASILPKYRGASPINYSLLNGDKESGVSIMLVEQGLDTGDVLAVDKIKLDNEIMLEELHDKLMIMGADLINKVIDDYQKYFDSRKEQNENEASIVGKIHKSMGQINFNEKSDVIYNKFRGLTPWPGLFFKLEDKIIKVHNINIIKQYNDNKNGEVVKVDKNGIKVACEDGFIIITRLQLPNKKPLNISEYLNGNSFEEGIIL.

111–114 (SILP) lines the (6S)-5,6,7,8-tetrahydrofolate pocket.

The protein belongs to the Fmt family.

It catalyses the reaction L-methionyl-tRNA(fMet) + (6R)-10-formyltetrahydrofolate = N-formyl-L-methionyl-tRNA(fMet) + (6S)-5,6,7,8-tetrahydrofolate + H(+). Its function is as follows. Attaches a formyl group to the free amino group of methionyl-tRNA(fMet). The formyl group appears to play a dual role in the initiator identity of N-formylmethionyl-tRNA by promoting its recognition by IF2 and preventing the misappropriation of this tRNA by the elongation apparatus. The chain is Methionyl-tRNA formyltransferase from Finegoldia magna (strain ATCC 29328 / DSM 20472 / WAL 2508) (Peptostreptococcus magnus).